A 122-amino-acid chain; its full sequence is LYR motif-containing protein 1 (122 aa).

This sequence belongs to the complex I LYR family.

May promote cell proliferation and inhibition of apoptosis of preadipocytes. The chain is LYR motif-containing protein 1 (Lyrm1) from Rattus norvegicus (Rat).